The primary structure comprises 70 residues: Aurein-3.1 (70 aa).

Residues 1–22 (MAFLKKSLFLVLFLGLVSLSIC) form the signal peptide. A propeptide spanning residues 23–49 (EKEKRQNEEDEDENEAANHEEGSEEKR) is cleaved from the precursor. Positions 27-48 (RQNEEDEDENEAANHEEGSEEK) are disordered. The span at 38–48 (AANHEEGSEEK) shows a compositional bias: basic and acidic residues. I66 carries the post-translational modification Isoleucine amide.

In terms of tissue distribution, expressed by the skin dorsal glands.

The protein localises to the secreted. It is found in the target cell membrane. In terms of biological role, amphipathic alpha-helical antimicrobial peptide with weak to potent activity against Gram-positive bacteria, and no activity against Gram-negative bacteria. Probably acts by disturbing membrane functions with its amphipathic structure. Shows anticancer activity. The sequence is that of Aurein-3.1 from Ranoidea aurea (Green and golden bell frog).